Reading from the N-terminus, the 248-residue chain is Triosephosphate isomerase (248 aa).

Residue 9–11 (NWK) coordinates substrate. Residue histidine 94 is the Electrophile of the active site. The active-site Proton acceptor is glutamate 166. Substrate is bound by residues glycine 172, serine 212, and 233–234 (GG).

This sequence belongs to the triosephosphate isomerase family. As to quaternary structure, homodimer.

The protein localises to the cytoplasm. The catalysed reaction is D-glyceraldehyde 3-phosphate = dihydroxyacetone phosphate. It functions in the pathway carbohydrate biosynthesis; gluconeogenesis. The protein operates within carbohydrate degradation; glycolysis; D-glyceraldehyde 3-phosphate from glycerone phosphate: step 1/1. In terms of biological role, involved in the gluconeogenesis. Catalyzes stereospecifically the conversion of dihydroxyacetone phosphate (DHAP) to D-glyceraldehyde-3-phosphate (G3P). The sequence is that of Triosephosphate isomerase from Clostridium perfringens (strain ATCC 13124 / DSM 756 / JCM 1290 / NCIMB 6125 / NCTC 8237 / Type A).